Consider the following 720-residue polypeptide: Chloroplastic group IIA intron splicing facilitator CRS1, chloroplastic (720 aa).

The N-terminal 77 residues, 1-77, are a transit peptide targeting the chloroplast; the sequence is MRNGINILSY…DQFRENRGVS (77 aa). Residues 131–159 are a coiled coil; the sequence is KAMKKIVRNVEKLDEDSDSEETQMDDLSE. 2 CRM domains span residues 205–301 and 359–456; these read LILD…EGQD and AKLT…EVAD. Coiled-coil stretches lie at residues 447 to 477 and 517 to 553; these read KDFLSDEVADLVEDRERLLSRYQHFEETKRE and RNLETEAEKARLEKELKSQEHKLSILKSKIEKSNMEL. The 101-residue stretch at 570-670 folds into the CRM 3 domain; sequence EILTNEEREC…KNYKRPSSKL (101 aa).

Homodimer. Interacts with RNA. Part of large ribonucleo-protein complexes that include group IIA introns and CRS1.

The protein resides in the plastid. Its subcellular location is the chloroplast stroma. In terms of biological role, required for the splicing of group IIA introns in chloroplasts, by regulating the intron folding. Forms splicing particles with RNA. May also be involved in chloroplast protein translation. In Arabidopsis thaliana (Mouse-ear cress), this protein is Chloroplastic group IIA intron splicing facilitator CRS1, chloroplastic.